The primary structure comprises 333 residues: Aspartate carbamoyltransferase catalytic subunit (333 aa).

The carbamoyl phosphate site is built by Arg61 and Thr62. Residue Lys89 coordinates L-aspartate. Arg111, His144, and Gln147 together coordinate carbamoyl phosphate. L-aspartate is bound by residues Arg184 and Arg248. Positions 289 and 290 each coordinate carbamoyl phosphate.

It belongs to the aspartate/ornithine carbamoyltransferase superfamily. ATCase family. Heterododecamer (2C3:3R2) of six catalytic PyrB chains organized as two trimers (C3), and six regulatory PyrI chains organized as three dimers (R2).

The catalysed reaction is carbamoyl phosphate + L-aspartate = N-carbamoyl-L-aspartate + phosphate + H(+). It functions in the pathway pyrimidine metabolism; UMP biosynthesis via de novo pathway; (S)-dihydroorotate from bicarbonate: step 2/3. In terms of biological role, catalyzes the condensation of carbamoyl phosphate and aspartate to form carbamoyl aspartate and inorganic phosphate, the committed step in the de novo pyrimidine nucleotide biosynthesis pathway. This Trichormus variabilis (strain ATCC 29413 / PCC 7937) (Anabaena variabilis) protein is Aspartate carbamoyltransferase catalytic subunit.